The chain runs to 85 residues: Large ribosomal subunit protein bL31B (85 aa).

This sequence belongs to the bacterial ribosomal protein bL31 family. Type B subfamily. As to quaternary structure, part of the 50S ribosomal subunit.

In Bifidobacterium longum subsp. infantis (strain ATCC 15697 / DSM 20088 / JCM 1222 / NCTC 11817 / S12), this protein is Large ribosomal subunit protein bL31B.